A 537-amino-acid chain; its full sequence is Synaptotagmin-2 (537 aa).

Topologically, residues 1-2 (MG) are cytoplasmic. A helical membrane pass occupies residues 3-23 (IISTILGVIGFGFGTTIGIVI). The Lumenal segment spans residues 24 to 537 (GYYLFIYFQS…QIELQWRNSS (514 aa)). The 183-residue stretch at 67-249 (DFDRIDWLNK…WPKTLNVQIM (183 aa)) folds into the SMP-LTD domain. Residues 227-505 (QEIIKDQVAN…TLGYVVINLG (279 aa)) form a phospholipid binding region. C2 domains lie at 240-362 (WPKT…LMTL) and 402-517 (DPNA…NDKY). Ca(2+) contacts are provided by Asp-276, Asp-282, Asp-332, and Glu-334.

It belongs to the synaptotagmin family. Ca(2+) serves as cofactor.

It localises to the golgi apparatus membrane. Functionally, may play an important role in regulating an unconventional protein trafficking from the cytosol to the extracellular matrix. The sequence is that of Synaptotagmin-2 (SYT2) from Arabidopsis thaliana (Mouse-ear cress).